The sequence spans 184 residues: Thymidine kinase (184 aa).

Residues 9–16 (AAMNSGKS) and 82–85 (DEAQ) contribute to the ATP site. E83 serves as the catalytic Proton acceptor. Residues C140, C142, C177, and C180 each coordinate Zn(2+).

It belongs to the thymidine kinase family. As to quaternary structure, homotetramer.

Its subcellular location is the cytoplasm. The catalysed reaction is thymidine + ATP = dTMP + ADP + H(+). The chain is Thymidine kinase from Chromobacterium violaceum (strain ATCC 12472 / DSM 30191 / JCM 1249 / CCUG 213 / NBRC 12614 / NCIMB 9131 / NCTC 9757 / MK).